The chain runs to 74 residues: NADH dehydrogenase [ubiquinone] 1 alpha subcomplex assembly factor 8 (74 aa).

The CHCH domain occupies 22 to 69 (LAACGAEAAAYGRCVQASTAPGGRLSKDFCAREFEALRSCFAAAAKKT). 2 short sequence motifs (cx9C motif) span residues 25–35 (CGAEAAAYGRC) and 51–61 (CAREFEALRSC). 2 disulfides stabilise this stretch: cysteine 25–cysteine 61 and cysteine 35–cysteine 51.

As to quaternary structure, interacts with NDUFAF5.

It localises to the mitochondrion. Functionally, involved in the assembly of mitochondrial NADH:ubiquinone oxidoreductase complex (complex I, MT-ND1). Required to stabilize NDUFAF5. In Homo sapiens (Human), this protein is NADH dehydrogenase [ubiquinone] 1 alpha subcomplex assembly factor 8.